The primary structure comprises 369 residues: Cyclin-dependent kinase 5 activator 2 (369 aa).

Over residues 1-11 (MGTVLSLSPAS) the composition is skewed to polar residues. Disordered regions lie at residues 1-55 (MGTV…SRLK), 72-176 (ASAK…SPRR), and 330-369 (EAAA…NLDR). Gly-2 carries N-myristoyl glycine lipidation. Positions 74–84 (AKKKKGSKKVT) are enriched in basic residues. Thr-84 carries the phosphothreonine modification. Residues 99–112 (RNRENLLRKGRDGP) show a composition bias toward basic and acidic residues. The segment covering 122-144 (AVPVPTVPTTAATCEPPSGGSAA) has biased composition (low complexity). A compositionally biased stretch (pro residues) spans 145–171 (APPPGSGGGKPPPPPPPAPQAAPPAPG). A compositionally biased stretch (low complexity) spans 331 to 352 (AAASTGGPPSGSSASTTSSSSA).

The protein belongs to the cyclin-dependent kinase 5 activator family. As to quaternary structure, heterodimer of a catalytic subunit and a regulatory subunit. In terms of processing, myristoylated. The Gly-2-Ala mutant is absent of the cell periphery, suggesting that a proper myristoylation signal is essential for the proper distribution of CDK5R2 (p39).

Its subcellular location is the cell membrane. Functionally, activator of CDK5/TPKII. The protein is Cyclin-dependent kinase 5 activator 2 (Cdk5r2) of Mus musculus (Mouse).